We begin with the raw amino-acid sequence, 359 residues long: Phospho-N-acetylmuramoyl-pentapeptide-transferase (359 aa).

A run of 10 helical transmembrane segments spans residues 26–46 (TIYAAITALIICFLLGPWLIR), 75–95 (GGVLIIFAVVVSTLLWANLTI), 97–117 (YVWLVLMVTLGYGLIGFADDY), 134–154 (LACEVCIALLVSVVLYAKPGF), 166–186 (VLPDLGWGYIFLSTFIIVGAA), 197–217 (GLAIGPAITCFMTYLLFAYFA), 233–253 (GVGELSIFCGAIVGAGIGFLW), 261–281 (VFMGDTGSLSLGGALGCLAIV), 286–306 (ILLAIVGGIFVLETFSVIFQV), and 336–356 (KVIVRFWIISILLALLAISTL).

This sequence belongs to the glycosyltransferase 4 family. MraY subfamily. Mg(2+) serves as cofactor.

It is found in the cell inner membrane. The enzyme catalyses UDP-N-acetyl-alpha-D-muramoyl-L-alanyl-gamma-D-glutamyl-meso-2,6-diaminopimeloyl-D-alanyl-D-alanine + di-trans,octa-cis-undecaprenyl phosphate = di-trans,octa-cis-undecaprenyl diphospho-N-acetyl-alpha-D-muramoyl-L-alanyl-D-glutamyl-meso-2,6-diaminopimeloyl-D-alanyl-D-alanine + UMP. It participates in cell wall biogenesis; peptidoglycan biosynthesis. Its function is as follows. Catalyzes the initial step of the lipid cycle reactions in the biosynthesis of the cell wall peptidoglycan: transfers peptidoglycan precursor phospho-MurNAc-pentapeptide from UDP-MurNAc-pentapeptide onto the lipid carrier undecaprenyl phosphate, yielding undecaprenyl-pyrophosphoryl-MurNAc-pentapeptide, known as lipid I. This chain is Phospho-N-acetylmuramoyl-pentapeptide-transferase, found in Syntrophus aciditrophicus (strain SB).